The sequence spans 240 residues: Small ribosomal subunit protein uS3 (240 aa).

Residues 39–109 enclose the KH type-2 domain; it reads IRQYVEKNLS…QIRINVVEVA (71 aa). Residues 214 to 240 form a disordered region; the sequence is EEQAPAQPATTPKRQRRRQQFEDRSNE.

This sequence belongs to the universal ribosomal protein uS3 family. As to quaternary structure, part of the 30S ribosomal subunit. Forms a tight complex with proteins S10 and S14.

In terms of biological role, binds the lower part of the 30S subunit head. Binds mRNA in the 70S ribosome, positioning it for translation. This is Small ribosomal subunit protein uS3 from Gloeothece citriformis (strain PCC 7424) (Cyanothece sp. (strain PCC 7424)).